We begin with the raw amino-acid sequence, 281 residues long: MAAEACVPAEFSKDEKNGSILSAFCSDIPDITSSTESPADSFLKVELELNLKLSNLVFQDPVQYVYNPLVYAWAPHENYVQTYCKSKKEVLFLGMNPGPFGMAQTGVPFGEVNHVRDWLQIEGPVSKPEVEHPKRRIRGFECPQSEVSGARFWSLFKSLCGQPETFFKHCFVHNHCPLIFMNHSGKNLTPTDLPKAQRDTLLEICDEALCQAVRVLGVKLVIGVGRFSEQRARKALMAEGIDVTVKGIMHPSPRNPQANKGWEGIVRGQLLELGVLSLLTG.

3 residues coordinate substrate: M95, F109, and N174. The DNA-binding stretch occupies residues 182–198 (NHSGKNLTPTDLPKAQR). Position 250 (H250) interacts with substrate.

This sequence belongs to the uracil-DNA glycosylase (UDG) superfamily. SMUG1 family.

Its subcellular location is the nucleus. Functionally, recognizes base lesions in the genome and initiates base excision DNA repair. Acts as a monofunctional DNA glycosylase specific for uracil (U) residues in DNA with a preference for single-stranded DNA substrates. Does not exhibit any enzymatic activity towards G/T mismatches. This Xenopus laevis (African clawed frog) protein is Single-strand selective monofunctional uracil DNA glycosylase (smug1).